Here is a 296-residue protein sequence, read N- to C-terminus: Enoyl-CoA hydratase AKT3-2 (296 aa).

The Peroxisomal targeting signal type 1 signature appears at 294-296 (PKL).

It belongs to the enoyl-CoA hydratase/isomerase family.

It is found in the peroxisome. It carries out the reaction a (3S)-3-hydroxyacyl-CoA = a (2E)-enoyl-CoA + H2O. The catalysed reaction is a 4-saturated-(3S)-3-hydroxyacyl-CoA = a (3E)-enoyl-CoA + H2O. It functions in the pathway mycotoxin biosynthesis. Functionally, enoyl-CoA hydratase; part of the gene clusters that mediate the biosynthesis of the host-selective toxins (HSTs) AK-toxins responsible for Japanese pear black spot disease by the Japanese pear pathotype. AK-toxins are esters of 9,10-epoxy 8-hydroxy 9-methyldecatrienoic acid (EDA). On cellular level, AK-toxins affect plasma membrane of susceptible cells and cause a sudden increase in loss of K(+) after a few minutes of toxin treatment. The acyl-CoA ligase AKT1, the hydrolase AKT2 and enoyl-CoA hydratase AKT3 are all involved in the biosynthesis of the AK-, AF- and ACT-toxin common 9,10-epoxy-8-hydroxy-9-methyl-decatrienoic acid (EDA) structural moiety. Part of the EDA biosynthesis occurs in the peroxisome since these 3 enzymes are localized in peroxisomes. The exact roles of the 3 enzymes, as well as of additional AK-toxin clusters enzymes, including AKT4, AKT6 and AKTS1, have still to be elucidated. The Cytochrome P450 monooxygenase AKT7 on the other side functions to limit production of EDA and AK-toxin, probably via the catalysis of a side reaction of EDA or its precursor. The chain is Enoyl-CoA hydratase AKT3-2 from Alternaria alternata (Alternaria rot fungus).